Consider the following 205-residue polypeptide: Non-specific lipid transfer protein GPI-anchored 13 (205 aa).

A signal peptide spans 1-24 (MESRKIKVMATAIALIMVAMVVDA). 4 disulfides stabilise this stretch: Cys-36/Cys-77, Cys-46/Cys-61, Cys-62/Cys-104, and Cys-75/Cys-113. Residues Asn-93, Asn-137, and Asn-165 are each glycosylated (N-linked (GlcNAc...) asparagine). The tract at residues 141–176 (SASAPTGSASEPTSMSSTPGSSAGNNSGRTTSVPGT) is disordered. Asn-177 carries the GPI-anchor amidated asparagine lipid modification. Residues 178–205 (HAQSFSKQWLGLEVVAHFFVIFYIFILV) constitute a propeptide, removed in mature form.

Belongs to the plant LTP family. As to expression, expressed preferentially in expanding leaves and sepals, restricted to the distal side. Expressed at low levels in roots and stems.

Its subcellular location is the cell membrane. Probable lipid transfer protein. The polypeptide is Non-specific lipid transfer protein GPI-anchored 13 (Arabidopsis thaliana (Mouse-ear cress)).